The sequence spans 103 residues: uncharacterized protein (103 aa).

This is an uncharacterized protein from Homo sapiens (Human).